Here is a 285-residue protein sequence, read N- to C-terminus: Bifunctional protein FolD (285 aa).

NADP(+) contacts are provided by residues 166 to 168 and Ile-232; that span reads GAS.

The protein belongs to the tetrahydrofolate dehydrogenase/cyclohydrolase family. Homodimer.

It carries out the reaction (6R)-5,10-methylene-5,6,7,8-tetrahydrofolate + NADP(+) = (6R)-5,10-methenyltetrahydrofolate + NADPH. It catalyses the reaction (6R)-5,10-methenyltetrahydrofolate + H2O = (6R)-10-formyltetrahydrofolate + H(+). It functions in the pathway one-carbon metabolism; tetrahydrofolate interconversion. Functionally, catalyzes the oxidation of 5,10-methylenetetrahydrofolate to 5,10-methenyltetrahydrofolate and then the hydrolysis of 5,10-methenyltetrahydrofolate to 10-formyltetrahydrofolate. The chain is Bifunctional protein FolD from Aliivibrio salmonicida (strain LFI1238) (Vibrio salmonicida (strain LFI1238)).